Here is a 232-residue protein sequence, read N- to C-terminus: Octanoyltransferase (232 aa).

One can recognise a BPL/LPL catalytic domain in the interval 43–231; sequence LPTSNYLLFV…HLTHLFEAEI (189 aa). Residues 88–95, 160–162, and 173–175 contribute to the substrate site; these read RGGDITYH, AMG, and GFA. The Acyl-thioester intermediate role is filled by cysteine 191.

Belongs to the LipB family.

It is found in the cytoplasm. It catalyses the reaction octanoyl-[ACP] + L-lysyl-[protein] = N(6)-octanoyl-L-lysyl-[protein] + holo-[ACP] + H(+). The protein operates within protein modification; protein lipoylation via endogenous pathway; protein N(6)-(lipoyl)lysine from octanoyl-[acyl-carrier-protein]: step 1/2. In terms of biological role, catalyzes the transfer of endogenously produced octanoic acid from octanoyl-acyl-carrier-protein onto the lipoyl domains of lipoate-dependent enzymes. Lipoyl-ACP can also act as a substrate although octanoyl-ACP is likely to be the physiological substrate. The sequence is that of Octanoyltransferase from Flavobacterium johnsoniae (strain ATCC 17061 / DSM 2064 / JCM 8514 / BCRC 14874 / CCUG 350202 / NBRC 14942 / NCIMB 11054 / UW101) (Cytophaga johnsonae).